We begin with the raw amino-acid sequence, 259 residues long: Thiazole synthase (259 aa).

The Schiff-base intermediate with DXP role is filled by K99. 1-deoxy-D-xylulose 5-phosphate-binding positions include G161, 187–188, and 209–210; these read AG and NT.

This sequence belongs to the ThiG family. In terms of assembly, homotetramer. Forms heterodimers with either ThiH or ThiS.

The protein resides in the cytoplasm. It catalyses the reaction [ThiS sulfur-carrier protein]-C-terminal-Gly-aminoethanethioate + 2-iminoacetate + 1-deoxy-D-xylulose 5-phosphate = [ThiS sulfur-carrier protein]-C-terminal Gly-Gly + 2-[(2R,5Z)-2-carboxy-4-methylthiazol-5(2H)-ylidene]ethyl phosphate + 2 H2O + H(+). It functions in the pathway cofactor biosynthesis; thiamine diphosphate biosynthesis. Catalyzes the rearrangement of 1-deoxy-D-xylulose 5-phosphate (DXP) to produce the thiazole phosphate moiety of thiamine. Sulfur is provided by the thiocarboxylate moiety of the carrier protein ThiS. In vitro, sulfur can be provided by H(2)S. The sequence is that of Thiazole synthase from Nautilia profundicola (strain ATCC BAA-1463 / DSM 18972 / AmH).